Here is a 222-residue protein sequence, read N- to C-terminus: MSLTINALTRDDQGKGASHRLRRNHKIPAIVYGTGKAPRNITLDVFEITRLLENEESYTSVLDLIVDKKKEAVIIKDLQRHPAKNIVTHVDFLRINLKQAIVTSVPLHFNGEENNEAMRLGAILNQFVTSVEVSCLPTDLPHAIDVDISNLTMGEHISFTGLNIPKGVVITALTHGDIETHNRSVVAIQEPRKIAEIEEETSIIVEDENIESNNADKNKSNS.

Belongs to the bacterial ribosomal protein bL25 family. CTC subfamily. In terms of assembly, part of the 50S ribosomal subunit; part of the 5S rRNA/L5/L18/L25 subcomplex. Contacts the 5S rRNA. Binds to the 5S rRNA independently of L5 and L18.

Functionally, this is one of the proteins that binds to the 5S RNA in the ribosome where it forms part of the central protuberance. The sequence is that of Large ribosomal subunit protein bL25 from Ruthia magnifica subsp. Calyptogena magnifica.